The chain runs to 138 residues: Basic phospholipase A2 homolog promutoxin (138 aa).

The N-terminal stretch at 1 to 16 (MRTLWIMAVLLLGVEG) is a signal peptide. 7 disulfide bridges follow: cysteine 42/cysteine 132, cysteine 44/cysteine 60, cysteine 59/cysteine 112, cysteine 65/cysteine 138, cysteine 66/cysteine 105, cysteine 73/cysteine 98, and cysteine 91/cysteine 103. The interval 122–133 (KKHRVTMKFLCK) is important for membrane-damaging activities in eukaryotes and bacteria; heparin-binding.

Belongs to the phospholipase A2 family. Group II subfamily. R49 sub-subfamily. In terms of assembly, homodimer; non-covalently linked. As to expression, expressed by the venom gland.

The protein localises to the secreted. Its function is as follows. Snake venom phospholipase A2 homolog that lacks enzymatic activity. Exhibits potent myotoxicity causing myonecrosis and edema in the gastrocnemius muscle of mice. Is also able to stimulate the release of IL12 (IL12A-IL12B), TNF-alpha (TNF), IL6 and IL1-beta (IL1B) from human monocytes, and induce IL2, TNFalpha and IL6 release from T-cells. A model of myotoxic mechanism has been proposed: an apo Lys49-PLA2 is activated by the entrance of a hydrophobic molecule (e.g. fatty acid) at the hydrophobic channel of the protein leading to a reorientation of a monomer. This reorientation causes a transition between 'inactive' to 'active' states, causing alignment of C-terminal and membrane-docking sites (MDoS) side-by-side and putting the membrane-disruption sites (MDiS) in the same plane, exposed to solvent and in a symmetric position for both monomers. The MDoS region stabilizes the toxin on membrane by the interaction of charged residues with phospholipid head groups. Subsequently, the MDiS region destabilizes the membrane with penetration of hydrophobic residues. This insertion causes a disorganization of the membrane, allowing an uncontrolled influx of ions (i.e. calcium and sodium), and eventually triggering irreversible intracellular alterations and cell death. The chain is Basic phospholipase A2 homolog promutoxin from Protobothrops mucrosquamatus (Taiwan habu).